The primary structure comprises 532 residues: Probable G-protein coupled receptor Mth-like 11 (532 aa).

The signal sequence occupies residues 1-20 (MGMFRVEYLLLGILVIGVRS). Topologically, residues 21–229 (RDIPNCDFFD…VRKSRLSNAS (209 aa)) are extracellular. Disulfide bonds link Cys-26/Cys-80, Cys-82/Cys-87, Cys-91/Cys-184, Cys-92/Cys-103, and Cys-145/Cys-204. Residue Asn-42 is glycosylated (N-linked (GlcNAc...) asparagine). N-linked (GlcNAc...) asparagine glycans are attached at residues Asn-110, Asn-123, Asn-166, Asn-195, and Asn-227. The chain crosses the membrane as a helical span at residues 230–250 (IPVKFSSVFFMVITIAAYLWL). At 251–262 (PKFRSLHGKCCN) the chain is on the cytoplasmic side. Residues 263 to 283 (LYFICLAITFLLNVISLFGIF) form a helical membrane-spanning segment. Over 284–290 (ELKTPIC) the chain is Extracellular. Residues 291 to 311 (YLTGYAGYFTVMATFLWLSVI) form a helical membrane-spanning segment. Topologically, residues 312 to 339 (SFDVWRRFAMRKFQVFYKNKRSSFFNYN) are cytoplasmic. Residues 340–360 (IIVWSSAGLLTCIIFLVDQFV) form a helical membrane-spanning segment. Topologically, residues 361-386 (ETNLDNPYNPAVGVFSCWIFTNGWSA) are extracellular. A helical membrane pass occupies residues 387–407 (TFYFYAPLAILIILNCASFFL). The Cytoplasmic portion of the chain corresponds to 408 to 439 (TTRYIYVENKQNQKVLNNSEPQKLSRNHANYR). Residues 440 to 460 (IYFRLFIIMGGSWFLEIIAFI) form a helical membrane-spanning segment. The Extracellular portion of the chain corresponds to 461 to 469 (CEMENMWKP). The helical transmembrane segment at 470-490 (LIILNDYINCSQGIIIFVATF) threads the bilayer. Topologically, residues 491–532 (CNHEMFRLIRKRIQNRNITSLELTNTSRPVESEKMADVELGK) are cytoplasmic.

Belongs to the G-protein coupled receptor 2 family. Mth subfamily.

It is found in the cell membrane. This chain is Probable G-protein coupled receptor Mth-like 11 (mthl11), found in Drosophila melanogaster (Fruit fly).